The primary structure comprises 246 residues: Phosphomannomutase 2 (246 aa).

N-acetylalanine is present on Ala2. The Nucleophile role is filled by Asp12. Mg(2+) is bound by residues Asp12 and Asp14. Asp14 serves as the catalytic Proton donor/acceptor. Arg21, Arg123, Arg134, Arg141, Ser179, and Asp181 together coordinate alpha-D-mannose 1-phosphate. Mg(2+) contacts are provided by Asp209, Phe221, Asp223, and Thr226.

It belongs to the eukaryotic PMM family. In terms of assembly, homodimer.

The protein resides in the cytoplasm. It carries out the reaction alpha-D-mannose 1-phosphate = D-mannose 6-phosphate. It functions in the pathway nucleotide-sugar biosynthesis; GDP-alpha-D-mannose biosynthesis; alpha-D-mannose 1-phosphate from D-fructose 6-phosphate: step 2/2. Involved in the synthesis of the GDP-mannose and dolichol-phosphate-mannose required for a number of critical mannosyl transfer reactions. In Bos taurus (Bovine), this protein is Phosphomannomutase 2 (PMM2).